Reading from the N-terminus, the 328-residue chain is UPF0252 protein PF0978 (328 aa).

Residues 3-23 (VPLLILLFLVLTSGCIAPSTP) traverse the membrane as a helical segment.

The protein belongs to the UPF0252 family.

The protein localises to the membrane. The polypeptide is UPF0252 protein PF0978 (Pyrococcus furiosus (strain ATCC 43587 / DSM 3638 / JCM 8422 / Vc1)).